Reading from the N-terminus, the 304-residue chain is Ribonuclease BN (304 aa).

7 residues coordinate Zn(2+): His-63, His-65, Asp-67, His-68, His-140, Asp-211, and His-269. The Proton acceptor role is filled by Asp-67.

This sequence belongs to the RNase Z family. RNase BN subfamily. Homodimer. Zn(2+) serves as cofactor.

Zinc phosphodiesterase, which has both exoribonuclease and endoribonuclease activities. This chain is Ribonuclease BN, found in Erwinia tasmaniensis (strain DSM 17950 / CFBP 7177 / CIP 109463 / NCPPB 4357 / Et1/99).